The sequence spans 375 residues: Type II restriction enzyme ApaLI (375 aa).

It catalyses the reaction Endonucleolytic cleavage of DNA to give specific double-stranded fragments with terminal 5'-phosphates.. Functionally, a subtype P restriction enzyme that recognizes the double-stranded sequence 5'-GTGCAC-3' and cleaves after G-1. This is Type II restriction enzyme ApaLI from Acetobacter pasteurianus (Acetobacter turbidans).